Here is a 78-residue protein sequence, read N- to C-terminus: Small integral membrane protein 10-like protein 2A (78 aa).

This Homo sapiens (Human) protein is Small integral membrane protein 10-like protein 2A.